The chain runs to 618 residues: UvrABC system protein C (618 aa).

One can recognise a GIY-YIG domain in the interval Asp-13–Ile-92. The UVR domain maps to Leu-204–Ile-239.

The protein belongs to the UvrC family. As to quaternary structure, interacts with UvrB in an incision complex.

It localises to the cytoplasm. Functionally, the UvrABC repair system catalyzes the recognition and processing of DNA lesions. UvrC both incises the 5' and 3' sides of the lesion. The N-terminal half is responsible for the 3' incision and the C-terminal half is responsible for the 5' incision. The polypeptide is UvrABC system protein C (Clostridium botulinum (strain Loch Maree / Type A3)).